Consider the following 88-residue polypeptide: Beta-defensin 115 (88 aa).

The first 27 residues, 1–27 (MLPDHFSPLSGDIKLSVLALVVLVVLA), serve as a signal peptide directing secretion. Intrachain disulfides connect C38/C65, C45/C59, and C49/C66.

This sequence belongs to the beta-defensin family.

Its subcellular location is the secreted. Has antibacterial activity. The protein is Beta-defensin 115 (DEFB115) of Homo sapiens (Human).